A 105-amino-acid chain; its full sequence is Met repressor (105 aa).

It belongs to the MetJ family. As to quaternary structure, homodimer.

Its subcellular location is the cytoplasm. In terms of biological role, this regulatory protein, when combined with SAM (S-adenosylmethionine) represses the expression of the methionine regulon and of enzymes involved in SAM synthesis. This chain is Met repressor, found in Shigella boydii serotype 18 (strain CDC 3083-94 / BS512).